Reading from the N-terminus, the 379-residue chain is Sulfate adenylyltransferase (379 aa).

Belongs to the sulfate adenylyltransferase family.

It catalyses the reaction sulfate + ATP + H(+) = adenosine 5'-phosphosulfate + diphosphate. It functions in the pathway sulfur metabolism; hydrogen sulfide biosynthesis; sulfite from sulfate: step 1/3. This is Sulfate adenylyltransferase from Cenarchaeum symbiosum (strain A).